Reading from the N-terminus, the 486-residue chain is MTSSDSGSAVPRLVIAAPSSGSGKTTVATGLMAALTARGLAVSPHKVGPDYIDPGYHALATGRVGRNLDAYLCGPELVGPLFLHGARGCDIAVVEGVMGLYDGAAGEGELASTAQVAKLLRAPVVLVVDASSQSRSVAALVHGFVSWDPEVRIGGVILNKVASDRHEALLREAVDSVGVPVLGVLRRAAPVETPSRHLGLVPVAERGSDAVDAVAAMGARVADGCDLEALVGLARSTGALSCAAWDAGEALVSSPPPPLPVPSPGAAPPDPLVRPGRPRPQAPDGLRRRVAMASGAAFTFSYAEHTELLAAAGAEVVTFDPLRDEELPEGTQGLVIGGGFPEVYASELSANEGLRKSVAELAFSGAPVAAECAGLLYLCRELDGLPMCGVLDAAARMSKRLTLGYRDAVAVSDSALAVAGTRMRGHEFHRTVVEPGAGAAPAWGMRAPERRVEGFVERGVHASYLHTHWAAEPGVARRFVERCRTS.

The segment covering 254–272 has biased composition (pro residues); the sequence is SPPPPLPVPSPGAAPPDPL. Residues 254-284 are disordered; it reads SPPPPLPVPSPGAAPPDPLVRPGRPRPQAPD. Positions 289–474 constitute a GATase cobBQ-type domain; it reads RVAMASGAAF…LHTHWAAEPG (186 aa). The active-site Nucleophile is the Cys372.

It belongs to the CobB/CbiA family. The cofactor is Mg(2+).

The catalysed reaction is hydrogenobyrinate + 2 L-glutamine + 2 ATP + 2 H2O = hydrogenobyrinate a,c-diamide + 2 L-glutamate + 2 ADP + 2 phosphate + 2 H(+). It participates in cofactor biosynthesis; adenosylcobalamin biosynthesis; cob(II)yrinate a,c-diamide from precorrin-2 (aerobic route): step 9/10. Its function is as follows. Catalyzes the ATP-dependent amidation of the two carboxylate groups at positions a and c of hydrogenobyrinate, using either L-glutamine or ammonia as the nitrogen source. The protein is Hydrogenobyrinate a,c-diamide synthase of Streptomyces coelicolor (strain ATCC BAA-471 / A3(2) / M145).